Consider the following 234-residue polypeptide: MCQTCRVGKRRDAREQIEAKIVELGRRQLLDHGAAGLSLRAIARNLGMVSSAVYRYVSSRDELLTLLLVDAYSDLADTVDRARDDTVADSWSDDVIAIARAVRGWAVTNPARWALLYGSPVPGYHAPPDRTAGVATRVVGAFFDAIAAGIATGDIRLTDDVAPQPMSSDFEKIRQEFGFPGDDRVVTKCFLLWAGVVGAISLEVFGQYGADMLTDPGVVFDAQTRLLVAVLAEH.

The 61-residue stretch at 15-75 (EQIEAKIVEL…LLLVDAYSDL (61 aa)) folds into the HTH tetR-type domain. The segment at residues 38-57 (SLRAIARNLGMVSSAVYRYV) is a DNA-binding region (H-T-H motif).

Homodimer.

It is found in the cytoplasm. Functionally, may participate in the regulatory network that controls the expression of MmpL lipid transporters. The polypeptide is HTH-type transcriptional regulator MT1864 (Mycobacterium tuberculosis (strain CDC 1551 / Oshkosh)).